We begin with the raw amino-acid sequence, 488 residues long: 3-octaprenyl-4-hydroxybenzoate carboxy-lyase (488 aa).

Position 172 (Asn172) interacts with Mn(2+). Prenylated FMN is bound by residues 175-177 (IYR), 189-191 (RWL), and 194-195 (RG). Position 238 (Glu238) interacts with Mn(2+). Asp287 functions as the Proton donor in the catalytic mechanism.

The protein belongs to the UbiD family. In terms of assembly, homohexamer. The cofactor is prenylated FMN. Mn(2+) is required as a cofactor.

It is found in the cell membrane. It catalyses the reaction a 4-hydroxy-3-(all-trans-polyprenyl)benzoate + H(+) = a 2-(all-trans-polyprenyl)phenol + CO2. It functions in the pathway cofactor biosynthesis; ubiquinone biosynthesis. Catalyzes the decarboxylation of 3-octaprenyl-4-hydroxy benzoate to 2-octaprenylphenol, an intermediate step in ubiquinone biosynthesis. The polypeptide is 3-octaprenyl-4-hydroxybenzoate carboxy-lyase (Legionella pneumophila (strain Paris)).